The primary structure comprises 78 residues: MSDTADRVKKIVVEHLGVEADKVTEEASFIDDLGADSLDIVELVMAFEEEFGVEIPDDAAEKISTVSDAIKYIDENKG.

A Carrier domain is found at 2–77; it reads SDTADRVKKI…DAIKYIDENK (76 aa). Serine 37 bears the O-(pantetheine 4'-phosphoryl)serine mark.

The protein belongs to the acyl carrier protein (ACP) family. Post-translationally, 4'-phosphopantetheine is transferred from CoA to a specific serine of apo-ACP by AcpS. This modification is essential for activity because fatty acids are bound in thioester linkage to the sulfhydryl of the prosthetic group.

The protein localises to the cytoplasm. Its pathway is lipid metabolism; fatty acid biosynthesis. Its function is as follows. Carrier of the growing fatty acid chain in fatty acid biosynthesis. The polypeptide is Acyl carrier protein (Novosphingobium aromaticivorans (strain ATCC 700278 / DSM 12444 / CCUG 56034 / CIP 105152 / NBRC 16084 / F199)).